The following is a 273-amino-acid chain: Homeobox protein ceh-43 (273 aa).

Disordered stretches follow at residues 47–79 (NGATGGSMYGTPQQTSAYAMYPPGPGSSPEEAF) and 153–204 (RRSK…LVSS). The homeobox DNA-binding region spans 102–161 (MRKPRTIYNSSQLQMLQKKFQKTQYLALPDRAALAHELGLSQTQVKIWFQNRRSKQKKQK).

It belongs to the distal-less homeobox family. Predominantly expressed in the head hypdodermis, neuronal support cells and CAN neurons.

The protein localises to the nucleus. In terms of biological role, probable transcription factor. Binds to the sequence motif 5'-ATAAT-3' in regulatory elements. Required for development of the anterior hypodermis during embryonic morphogenesis for cell adhesion; also affects embryonic and larval viability. Modulates and maintains dopaminergic neuron differentiation. May activate dopamine pathway genes in concert with ETS domain-containing protein ast-1, and homeobox proteins ceh-40 and ceh-20. This Caenorhabditis elegans protein is Homeobox protein ceh-43 (ceh-43).